A 155-amino-acid polypeptide reads, in one-letter code: Egg-lysin (155 aa).

The N-terminal stretch at 1–18 is a signal peptide; it reads MKLLVLCLFAMMATLAVS.

As to quaternary structure, monomer. Homodimer. Molecules associate into dimers and then rapidly dissociate again. Interacts (as a monomer) with the egg vitelline layer protein VERL (via VERL repeats); each VERL chain can bind multiple copies of lysin. Sperm (at protein level).

The protein localises to the cytoplasmic vesicle. Its subcellular location is the secretory vesicle. It is found in the acrosome lumen. In terms of biological role, creates a 3 um hole in the egg vitelline layer through which the sperm passes. Does not have enzyme activity. Species-specific interaction between the sperm protein lysin and the egg protein VERL exposes a basic surface on lysin that may dissociate the egg vitelline layer via electrostatic repulsion. Plays a role in ensuring species-specific fertilization. This chain is Egg-lysin, found in Haliotis corrugata (Pink abalone).